Reading from the N-terminus, the 508-residue chain is Maturase K (508 aa).

This sequence belongs to the intron maturase 2 family. MatK subfamily.

Its subcellular location is the plastid. The protein resides in the chloroplast. Usually encoded in the trnK tRNA gene intron. Probably assists in splicing its own and other chloroplast group II introns. This chain is Maturase K, found in Amburana cearensis (Cerejeira).